The sequence spans 782 residues: uncharacterized protein (782 aa).

Disordered regions lie at residues Met1–Ser25 and Arg175–Arg195. Residues Glu13–Ser25 are compositionally biased toward low complexity. Residues Arg183 to Arg195 show a composition bias toward basic and acidic residues. Coiled coils occupy residues Arg223 to Asn331, Leu348 to Leu398, Asn428 to Asn601, and Thr699 to Lys743. The tract at residues Asn748 to Leu782 is disordered. Positions Ala769–Leu782 are enriched in polar residues.

This is an uncharacterized protein from Caenorhabditis elegans.